The following is a 369-amino-acid chain: UPF0754 membrane protein Aflv_2299 (369 aa).

Transmembrane regions (helical) follow at residues 1–21 and 347–367; these read MGLFLYLLFMIVVGAFIGGMT and YLGALLGGIIGLIQGCITFFV.

This sequence belongs to the UPF0754 family.

It is found in the cell membrane. The protein is UPF0754 membrane protein Aflv_2299 of Anoxybacillus flavithermus (strain DSM 21510 / WK1).